A 624-amino-acid chain; its full sequence is Forkhead box protein O1 (624 aa).

Disordered stretches follow at residues M1–S62 and A94–N128. T24 bears the Phosphothreonine; by PKB/AKT1 or PKB/AKT2 and SGK1 mark. Composition is skewed to low complexity over residues S37–S62 and A105–P119. Positions W130 to A224 form a DNA-binding region, fork-head. DNA-binding stretches follow at residues N181–S188 and S204–W207. A Phosphoserine; by STK4/MST1 modification is found at S182. Phosphoserine occurs at positions 188, 204, and 205. Positions S204–D306 are disordered. K215 and K218 each carry N6-acetyllysine. S219 carries the post-translational modification Phosphoserine; by CDK1. 2 positions are modified to omega-N-methylarginine; by PRMT1: R221 and R223. A Nuclear localization signal motif is present at residues R221–R223. S226 is subject to Phosphoserine; by PKB/AKT1 and SGK1. An N6-acetyllysine mark is found at K232, K235, and K244. The segment covering A234–A245 has biased composition (basic residues). The segment at G253–Q532 is sufficient for interaction with NLK. Phosphoserine occurs at positions 257 and 268. Residues N279–G296 show a composition bias toward polar residues. Residue S289 is modified to Phosphoserine; by PKB/AKT1. Residue S292 is modified to Phosphoserine; by CK1 and SGK1. The residue at position 295 (S295) is a Phosphoserine; by CK1. S299 is modified (phosphoserine; by DYRK1A). T303 bears the Phosphothreonine mark. Residues S333 to P428 form a required for interaction with RUNX2 region. Position 393 is an N6-acetyllysine (K393). Residues L431–L435 carry the Required for interaction with SIRT1 motif.

Interacts with LRPPRC. Interacts with RUNX2; the interaction inhibits RUNX2 transcriptional activity and mediates the IGF1/insulin-dependent BGLAP expression in osteoblasts Interacts with PPP2R1A; the interaction regulates the dephosphorylation of FOXO1 at Thr-24 and Ser-263 leading to its nuclear import. Interacts with NLK. Interacts with SIRT1; the interaction results in the deacetylation of FOXO1 leading to activation of FOXO1-mediated transcription of genes involved in DNA repair and stress resistance. Binds to CDK1. Interacts with the 14-3-3 proteins, YWHAG and YWHAZ; the interactions require insulin-stimulated phosphorylation on Thr-24, promote nuclear exit and loss of transcriptional activity. Interacts with SKP2; the interaction ubiquitinates FOXO1 leading to its proteasomal degradation. The interaction requires the presence of KRIT1. Interacts (via the C-terminal half) with ATF4 (via its DNA binding domain); the interaction occurs in osteoblasts, regulates glucose homeostasis via suppression of beta-cell proliferation and subsequent decrease in insulin production. Interacts with PRMT1; the interaction methylates FOXO1, prevents PKB/AKT1 phosphorylation and retains FOXO1 in the nucleus. Interacts with EP300 and CREBBP; the interactions acetylate FOXO1. Interacts with SIRT2; the interaction is disrupted in response to oxidative stress or serum deprivation, leading to increased level of acetylated FOXO1, which promotes stress-induced autophagy by stimulating E1-like activating enzyme ATG7. Interacts (acetylated form) with ATG7; the interaction is increased in response to oxidative stress or serum deprivation and promotes the autophagic process leading to cell death. Interacts (acetylated form) with PPARG. Interacts with XBP1; this interaction is direct and leads to FOXO1 ubiquitination and degradation via the proteasome pathway. Interacts (via the Fork-head domain) with CEBPA; the interaction increases when FOXO1 is deacetylated. Interacts with WDFY2. Forms a complex with WDFY2 and AKT1. Interacts with CRY1. Interacts with PPIA/CYPA; the interaction promotes FOXO1 dephosphorylation, nuclear accumulation and transcriptional activity. Interacts with TOX4; FOXO1 is required for full induction of TOX4-dependent activity and the interaction is inhibited by insulin. Interacts (when phosphorylated on Ser-226) with STUB1/CHIP. Post-translationally, phosphorylation by NLK promotes nuclear export and inhibits the transcriptional activity. In response to growth factors, phosphorylation on Thr-24, Ser-226 and Ser-292 by PKB/AKT1 promotes nuclear export and inactivation of transactivational activity. Phosphorylation on Thr-24 is required for binding 14-3-3 proteins. Phosphorylation of Ser-226 decreases DNA-binding activity and promotes the phosphorylation of Thr-24 and Ser-289, permitting phosphorylation of Ser-292 and Ser-295, probably by CDK1, leading to nuclear exclusion and loss of function. Stress signals, such as response to oxygen or nitric oxide, attenuate the PKB/AKT1-mediated phosphorylation leading to nuclear retention. Phosphorylation of Ser-299 is independent of IGF1 and leads to reduced function. Dephosphorylated on Thr-24 and Ser-226 by PP2A in beta-cells under oxidative stress leading to nuclear retention. Phosphorylation of Ser-219 by CDK1 disrupts binding of 14-3-3 proteins leading to nuclear accumulation and has no effect on DNA binding nor transcriptional activity. Phosphorylation by STK4/MST1 on Ser-182, upon oxidative stress, inhibits binding to 14-3-3 proteins and nuclear export. PPIA/CYPA promotes its dephosphorylation on Ser-226. In terms of processing, ubiquitinated by SKP2. Ubiquitination leads to proteasomal degradation. Ubiquitinated by STUB1/CHIP; when Ser-226 is phosphorylated. Methylation inhibits AKT1-mediated phosphorylation at Ser-226 and is increased by oxidative stress. Post-translationally, acetylated. Acetylation at Lys-232 and Lys-244 are necessary for autophagic cell death induction. Deacetylated by SIRT2 in response to oxidative stress or serum deprivation, thereby negatively regulating FOXO1-mediated autophagic cell death. Once in the nucleus, acetylated by CREBBP/EP300. Acetylation diminishes the interaction with target DNA and attenuates the transcriptional activity. It increases the phosphorylation at Ser-226. Deacetylation by SIRT1 results in reactivation of the transcriptional activity. Oxidative stress by hydrogen peroxide treatment appears to promote deacetylation and uncoupling of insulin-induced phosphorylation. By contrast, resveratrol acts independently of acetylation. Acetylated at Lys-393, promoting its localization to the nucleus and transcription factor activity. Deacetylation at Lys-393 by SIRT6, promotes its translocation into the cytoplasm, preventing its transcription factor activity. Deacetylation and subsequent inhibition by SIRT6 has different effects depending on cell types: it inhibits gluconeogenesis in hepatocytes, promotes glucose sensing in pancreatic beta-cells and regulates lipid catabolism in brown adipocytes.

It is found in the cytoplasm. Its subcellular location is the nucleus. Its function is as follows. Transcription factor that is the main target of insulin signaling and regulates metabolic homeostasis in response to oxidative stress. Binds to the insulin response element (IRE) with consensus sequence 5'-TT[G/A]TTTTG-3' and the related Daf-16 family binding element (DBE) with consensus sequence 5'-TT[G/A]TTTAC-3'. Activity suppressed by insulin. Main regulator of redox balance and osteoblast numbers and controls bone mass. Orchestrates the endocrine function of the skeleton in regulating glucose metabolism. Also acts as a key regulator of chondrogenic commitment of skeletal progenitor cells in response to lipid availability: when lipids levels are low, translocates to the nucleus and promotes expression of SOX9, which induces chondrogenic commitment and suppresses fatty acid oxidation. Acts synergistically with ATF4 to suppress osteocalcin/BGLAP activity, increasing glucose levels and triggering glucose intolerance and insulin insensitivity. Also suppresses the transcriptional activity of RUNX2, an upstream activator of osteocalcin/BGLAP. Acts as an inhibitor of glucose sensing in pancreatic beta cells by acting as a transcription repressor and suppressing expression of PDX1. In hepatocytes, promotes gluconeogenesis by acting together with PPARGC1A and CEBPA to activate the expression of genes such as IGFBP1, G6PC1 and PCK1. Also promotes gluconeogenesis by directly promoting expression of PPARGC1A and G6PC1. Important regulator of cell death acting downstream of CDK1, PKB/AKT1 and STK4/MST1. Promotes neural cell death. Mediates insulin action on adipose tissue. Regulates the expression of adipogenic genes such as PPARG during preadipocyte differentiation and, adipocyte size and adipose tissue-specific gene expression in response to excessive calorie intake. Regulates the transcriptional activity of GADD45A and repair of nitric oxide-damaged DNA in beta-cells. Required for the autophagic cell death induction in response to starvation or oxidative stress in a transcription-independent manner. Mediates the function of MLIP in cardiomyocytes hypertrophy and cardiac remodeling. Positive regulator of apoptosis in cardiac smooth muscle cells as a result of its transcriptional activation of pro-apoptotic genes. Regulates endothelial cell (EC) viability and apoptosis in a PPIA/CYPA-dependent manner via transcription of CCL2 and BCL2L11 which are involved in EC chemotaxis and apoptosis. In Bos taurus (Bovine), this protein is Forkhead box protein O1 (FOXO1).